The sequence spans 490 residues: Beta-glucosidase 42 (490 aa).

A beta-D-glucoside is bound by residues Gln35, His137, 182 to 183, Tyr317, and Glu388; that span reads NE. Glu183 functions as the Proton donor in the catalytic mechanism. The active-site Nucleophile is Glu388. A glycan (N-linked (GlcNAc...) asparagine) is linked at Asn420. A beta-D-glucoside is bound by residues Trp437, 444 to 445, and Phe453; that span reads EW.

This sequence belongs to the glycosyl hydrolase 1 family. As to expression, expressed at low levels predominantly in root epidermal cells.

The catalysed reaction is Hydrolysis of terminal, non-reducing beta-D-glucosyl residues with release of beta-D-glucose.. In terms of biological role, glucosidase that hydrolyzes scopolin and various beta-glucosides, cellooligosaccharides (mainly cellotriose) and laminarioligosaccharides. Can use p-nitrophenyl-beta-glucosides (pNP beta-Glc) and p-nitrophenyl-beta-D-fucosides (pNP beta-D-Fuc) as substrates, and, to a lower extent, beta-galactosides, beta-mannosides and beta-xylosides. Involved in the secretion of root-derived phenolics upon iron ions (Fe) depletion. Promotes disease resistance toward B.cinerea, H.arabidopsidis and P.syringae pv. tomato DC3000. Required during rhizobacteria-mediated (e.g. P.fluorescens WCS417r) broad-spectrum induced systemic resistance (ISR) against several pathogens. This is Beta-glucosidase 42 from Arabidopsis thaliana (Mouse-ear cress).